The following is a 410-amino-acid chain: Cysteine desulfurase IscS (410 aa).

Pyridoxal 5'-phosphate contacts are provided by residues A80–T81, N160, Q188, and S208–H210. Residue K211 is modified to N6-(pyridoxal phosphate)lysine. T248 is a binding site for pyridoxal 5'-phosphate. Residue C334 is the Cysteine persulfide intermediate of the active site. C334 is a binding site for [2Fe-2S] cluster.

The protein belongs to the class-V pyridoxal-phosphate-dependent aminotransferase family. NifS/IscS subfamily. As to quaternary structure, homodimer. Forms a heterotetramer with IscU, interacts with other sulfur acceptors. Pyridoxal 5'-phosphate is required as a cofactor.

It is found in the cytoplasm. It carries out the reaction (sulfur carrier)-H + L-cysteine = (sulfur carrier)-SH + L-alanine. Its pathway is cofactor biosynthesis; iron-sulfur cluster biosynthesis. In terms of biological role, master enzyme that delivers sulfur to a number of partners involved in Fe-S cluster assembly, tRNA modification or cofactor biosynthesis. Catalyzes the removal of elemental sulfur atoms from cysteine to produce alanine. Functions as a sulfur delivery protein for Fe-S cluster synthesis onto IscU, an Fe-S scaffold assembly protein, as well as other S acceptor proteins. This Rickettsia conorii (strain ATCC VR-613 / Malish 7) protein is Cysteine desulfurase IscS.